A 187-amino-acid polypeptide reads, in one-letter code: MKAFLVALVVAIELTLVFAGCPTIVSKNRWGGQQASQVQYTVKPLKYVIIHHTSTPTCTNEDDCSRRLVNIQDYHMNRLDFDDIGYNFMIGGDGQIYEGAGWHKEGAHARGWNSKSLGIGFIGDFQTNLPSSKQLDAGKKFLECAVEKGEIEDTYKLIGARTVRPTDSPGTLLFREIQTWRGFTRNP.

The signal sequence occupies residues 1 to 19 (MKAFLVALVVAIELTLVFA). Intrachain disulfides connect C21/C144 and C58/C64. The N-acetylmuramoyl-L-alanine amidase domain occupies 43–170 (KPLKYVIIHH…RTVRPTDSPG (128 aa)).

This sequence belongs to the N-acetylmuramoyl-L-alanine amidase 2 family. As to expression, localizes to plasma (at protein level).

It is found in the secreted. Its function is as follows. Peptidoglycan-recognition protein probably involved in innate immunity by binding to peptidoglycans (PGN) of bacteria and activating the prophenoloxidase (proPO) cascade immune response. Binds to 1,3-beta-D-glucan and PGN. The chain is Peptidoglycan-recognition protein 2 (PGRP-2) from Holotrichia diomphalia (Korean black chafer).